We begin with the raw amino-acid sequence, 195 residues long: Large ribosomal subunit protein uL5 (195 aa).

Belongs to the universal ribosomal protein uL5 family. Part of the 50S ribosomal subunit; part of the 5S rRNA/L5/L18/L25 subcomplex. Contacts the 5S rRNA and the P site tRNA. Forms a bridge to the 30S subunit in the 70S ribosome.

In terms of biological role, this is one of the proteins that bind and probably mediate the attachment of the 5S RNA into the large ribosomal subunit, where it forms part of the central protuberance. In the 70S ribosome it contacts protein S13 of the 30S subunit (bridge B1b), connecting the 2 subunits; this bridge is implicated in subunit movement. Contacts the P site tRNA; the 5S rRNA and some of its associated proteins might help stabilize positioning of ribosome-bound tRNAs. The polypeptide is Large ribosomal subunit protein uL5 (Chlorobium phaeobacteroides (strain DSM 266 / SMG 266 / 2430)).